A 468-amino-acid polypeptide reads, in one-letter code: Adenosylhomocysteinase (468 aa).

The substrate site is built by Thr57, Asp132, and Glu194. 195–197 is an NAD(+) binding site; it reads TTT. The substrate site is built by Lys224 and Asp228. NAD(+)-binding positions include Asn229, 258–263, Glu281, Asn316, 337–339, and Asn382; these read GFGDVG and IGH.

It belongs to the adenosylhomocysteinase family. Requires NAD(+) as cofactor.

It localises to the cytoplasm. The catalysed reaction is S-adenosyl-L-homocysteine + H2O = L-homocysteine + adenosine. It functions in the pathway amino-acid biosynthesis; L-homocysteine biosynthesis; L-homocysteine from S-adenosyl-L-homocysteine: step 1/1. May play a key role in the regulation of the intracellular concentration of adenosylhomocysteine. This is Adenosylhomocysteinase from Methylobacterium nodulans (strain LMG 21967 / CNCM I-2342 / ORS 2060).